The following is a 455-amino-acid chain: Ribulose bisphosphate carboxylase large chain (455 aa).

N6,N6,N6-trimethyllysine is present on Lys5. Substrate contacts are provided by Asn114 and Thr164. Catalysis depends on Lys166, which acts as the Proton acceptor. Residue Lys168 coordinates substrate. Mg(2+)-binding residues include Lys192, Asp194, and Glu195. At Lys192 the chain carries N6-carboxylysine. His285 functions as the Proton acceptor in the catalytic mechanism. The substrate site is built by Arg286, His318, and Ser370.

This sequence belongs to the RuBisCO large chain family. Type I subfamily. As to quaternary structure, heterohexadecamer of 8 large chains and 8 small chains; disulfide-linked. The disulfide link is formed within the large subunit homodimers. It depends on Mg(2+) as a cofactor. Post-translationally, the disulfide bond which can form in the large chain dimeric partners within the hexadecamer appears to be associated with oxidative stress and protein turnover.

Its subcellular location is the plastid. It localises to the chloroplast. It carries out the reaction 2 (2R)-3-phosphoglycerate + 2 H(+) = D-ribulose 1,5-bisphosphate + CO2 + H2O. The enzyme catalyses D-ribulose 1,5-bisphosphate + O2 = 2-phosphoglycolate + (2R)-3-phosphoglycerate + 2 H(+). Functionally, ruBisCO catalyzes two reactions: the carboxylation of D-ribulose 1,5-bisphosphate, the primary event in carbon dioxide fixation, as well as the oxidative fragmentation of the pentose substrate in the photorespiration process. Both reactions occur simultaneously and in competition at the same active site. This chain is Ribulose bisphosphate carboxylase large chain, found in Lupinus digitatus (Lupine).